Reading from the N-terminus, the 313-residue chain is Homoserine O-succinyltransferase (313 aa).

Cysteine 142 (acyl-thioester intermediate) is an active-site residue. Positions 163 and 192 each coordinate substrate. Histidine 235 functions as the Proton acceptor in the catalytic mechanism. Glutamate 237 is an active-site residue. A substrate-binding site is contributed by arginine 249.

The protein belongs to the MetA family.

It localises to the cytoplasm. The catalysed reaction is L-homoserine + succinyl-CoA = O-succinyl-L-homoserine + CoA. The protein operates within amino-acid biosynthesis; L-methionine biosynthesis via de novo pathway; O-succinyl-L-homoserine from L-homoserine: step 1/1. Its function is as follows. Transfers a succinyl group from succinyl-CoA to L-homoserine, forming succinyl-L-homoserine. In Vibrio atlanticus (strain LGP32) (Vibrio splendidus (strain Mel32)), this protein is Homoserine O-succinyltransferase.